Consider the following 152-residue polypeptide: Nucleoside diphosphate kinase (152 aa).

Lysine 11, phenylalanine 59, arginine 87, threonine 93, arginine 104, and asparagine 114 together coordinate ATP. Histidine 117 functions as the Pros-phosphohistidine intermediate in the catalytic mechanism.

This sequence belongs to the NDK family. In terms of assembly, homotetramer. Mg(2+) is required as a cofactor.

The protein localises to the cytoplasm. It catalyses the reaction a 2'-deoxyribonucleoside 5'-diphosphate + ATP = a 2'-deoxyribonucleoside 5'-triphosphate + ADP. The enzyme catalyses a ribonucleoside 5'-diphosphate + ATP = a ribonucleoside 5'-triphosphate + ADP. Major role in the synthesis of nucleoside triphosphates other than ATP. The ATP gamma phosphate is transferred to the NDP beta phosphate via a ping-pong mechanism, using a phosphorylated active-site intermediate. In Prochlorococcus marinus (strain MIT 9312), this protein is Nucleoside diphosphate kinase.